A 359-amino-acid chain; its full sequence is Protein-arginine kinase (359 aa).

The region spanning 25–257 (IVISSRVRLA…QQVIEQERML (233 aa)) is the Phosphagen kinase C-terminal domain. Residues 28-32 (SSRVR), histidine 93, arginine 128, 179-183 (RASLM), and 210-215 (RGIYGE) each bind ATP. Positions 340-345 (RDAKRA) match the RDXXRA motif of the pArg binding pocket involved in allosteric regulation motif.

The protein belongs to the ATP:guanido phosphotransferase family.

It carries out the reaction L-arginyl-[protein] + ATP = N(omega)-phospho-L-arginyl-[protein] + ADP + H(+). Its activity is regulated as follows. Appears to be allosterically activated by the binding of pArg-containing polypeptides to the pArg-binding pocket localized in the C-terminal domain of McsB. Its function is as follows. Catalyzes the specific phosphorylation of arginine residues in proteins. This Syntrophomonas wolfei subsp. wolfei (strain DSM 2245B / Goettingen) protein is Protein-arginine kinase.